Consider the following 785-residue polypeptide: (+)-copalyl diphosphate synthase 3, chloroplastic (785 aa).

Residue Lys-238 participates in substrate binding. 2 residues coordinate Mg(2+): Asp-371 and Asp-373. The short motif at 371–374 (DIDD) is the DXDD motif element. Lys-457 provides a ligand contact to substrate.

This sequence belongs to the terpene synthase family. It depends on Mg(2+) as a cofactor. In terms of tissue distribution, present in both leaves and flowers, with higher levels in leaves.

Its subcellular location is the plastid. The protein resides in the chloroplast. The catalysed reaction is (2E,6E,10E)-geranylgeranyl diphosphate = (+)-copalyl diphosphate. It functions in the pathway secondary metabolite biosynthesis; terpenoid biosynthesis. Functionally, involved in the biosynthesis of labdane-type diterpenoid including marrubiin and other labdane-related furanoid diterpenoids with potential applications as anti-diabetics, analgesics or vasorelaxants. Terpene synthase that produces (+)-copalyl diphosphate ((+)-CPP) from geranylgeranyl diphosphate (GGPP). In Marrubium vulgare (White horehound), this protein is (+)-copalyl diphosphate synthase 3, chloroplastic.